Reading from the N-terminus, the 120-residue chain is Jacalin-related lectin 39 (120 aa).

The 115-residue stretch at S6–N120 folds into the Jacalin-type lectin domain.

It belongs to the jacalin lectin family.

The sequence is that of Jacalin-related lectin 39 (JAL39) from Arabidopsis thaliana (Mouse-ear cress).